We begin with the raw amino-acid sequence, 142 residues long: Peptide methionine sulfoxide reductase MsrB (142 aa).

The MsrB domain occupies 13–135 (EKDWKVELSE…NSLSMTFKGE (123 aa)). Positions 52, 55, 101, and 104 each coordinate Zn(2+). The active-site Nucleophile is the Cys-124.

The protein belongs to the MsrB Met sulfoxide reductase family. Requires Zn(2+) as cofactor.

The catalysed reaction is L-methionyl-[protein] + [thioredoxin]-disulfide + H2O = L-methionyl-(R)-S-oxide-[protein] + [thioredoxin]-dithiol. The sequence is that of Peptide methionine sulfoxide reductase MsrB from Alteromonas mediterranea (strain DSM 17117 / CIP 110805 / LMG 28347 / Deep ecotype).